A 429-amino-acid polypeptide reads, in one-letter code: Glutamyl-tRNA reductase (429 aa).

Substrate-binding positions include 50-53 (TCNR), serine 108, 113-115 (EPQ), and glutamine 119. Cysteine 51 acts as the Nucleophile in catalysis. Position 188 to 193 (188 to 193 (GAGEMI)) interacts with NADP(+).

It belongs to the glutamyl-tRNA reductase family. In terms of assembly, homodimer.

It catalyses the reaction (S)-4-amino-5-oxopentanoate + tRNA(Glu) + NADP(+) = L-glutamyl-tRNA(Glu) + NADPH + H(+). It functions in the pathway porphyrin-containing compound metabolism; protoporphyrin-IX biosynthesis; 5-aminolevulinate from L-glutamyl-tRNA(Glu): step 1/2. Functionally, catalyzes the NADPH-dependent reduction of glutamyl-tRNA(Glu) to glutamate 1-semialdehyde (GSA). The protein is Glutamyl-tRNA reductase of Polaromonas naphthalenivorans (strain CJ2).